Consider the following 315-residue polypeptide: Small ribosomal subunit protein uS3 (315 aa).

A KH type-2 domain is found at 38-106 (IRKMMSRGME…QVQLNILEVK (69 aa)). The segment at 211 to 315 (AEREAQEALQ…VANTPEKAEE (105 aa)) is disordered. A compositionally biased stretch (basic residues) spans 222 to 232 (QTRRERPRRGP). A compositionally biased stretch (low complexity) spans 265–315 (APAETPAGEAAATEPTAPVAEPATAAASAPAEAASAPAEAAVANTPEKAEE).

Belongs to the universal ribosomal protein uS3 family. In terms of assembly, part of the 30S ribosomal subunit. Forms a tight complex with proteins S10 and S14.

Functionally, binds the lower part of the 30S subunit head. Binds mRNA in the 70S ribosome, positioning it for translation. This Frankia casuarinae (strain DSM 45818 / CECT 9043 / HFP020203 / CcI3) protein is Small ribosomal subunit protein uS3.